Here is a 143-residue protein sequence, read N- to C-terminus: MSLRHMSRRASRFGVVAVASIGLAAAAQSVAFAAPAFSVSPASGLSDGQSVSVSVSGAAAGETYYIAQCAPVGGQDACNPATATSFTTDASGAASFSFVVRKSYAGSTPEGTPVGSVDCATDACNLGAGNSGLDLGHVALTFG.

The N-terminal stretch at 1–33 (MSLRHMSRRASRFGVVAVASIGLAAAAQSVAFA) is a signal peptide. 2 cysteine pairs are disulfide-bonded: C69/C78 and C119/C124.

Belongs to the neocarzinostatin family.

Binds non-covalently to a chromophore which is the cytotoxic and mutagenic component of the antibiotic. The chromophore binds to DNA as a weak intercalator and causes single- and double-strand breaks. This is Actinoxanthin (axnA) from Streptomyces globisporus.